A 58-amino-acid polypeptide reads, in one-letter code: MTQVVLGEHEGIDSALRRFKRQVSKAGILADVKYHRHFETPLERRKRKAVAARRKRRF.

Belongs to the bacterial ribosomal protein bS21 family.

In Nostoc sp. (strain PCC 7120 / SAG 25.82 / UTEX 2576), this protein is Small ribosomal subunit protein bS21B (rpsU2).